A 64-amino-acid chain; its full sequence is Large ribosomal subunit protein bL35 (64 aa).

A disordered region spans residues 1-29; it reads MPKMKTHSGAKKRFKLTGSGKLRRQQANR.

The protein belongs to the bacterial ribosomal protein bL35 family.

The chain is Large ribosomal subunit protein bL35 from Pseudarthrobacter chlorophenolicus (strain ATCC 700700 / DSM 12829 / CIP 107037 / JCM 12360 / KCTC 9906 / NCIMB 13794 / A6) (Arthrobacter chlorophenolicus).